The chain runs to 177 residues: MSHSRRAAPTQDQCHTPGFPTSRETSGSIWQARICGSLQALDTWRTHIPRKSPAPTQASQICLLLPESPWRNPTPRGFLKPLINWDAILYFKEKRNIQVTTQAHPQNQASCSSQEVATPGLVPQAAAPKVYERSHDNLNAEAQGLAGAQVSKPQNPITRLCSLKEQSILKIFTKQSI.

The disordered stretch occupies residues 1–27 (MSHSRRAAPTQDQCHTPGFPTSRETSG).

This is an uncharacterized protein from Homo sapiens (Human).